A 314-amino-acid chain; its full sequence is Vacuolar membrane protein EC1118_1N9_3125g (314 aa).

A disordered region spans residues 32 to 60 (KPTSSVVSETSSKSLPSLTSSAFSTSSGA). A helical transmembrane segment spans residues 93–113 (VYIAVGAVIGAIFISILIWWL). 3 positions are modified to phosphoserine: Ser148, Ser254, and Ser274. Residues 240-309 (EERKLNLNRP…PSMFLDDVLN (70 aa)) form a disordered region. Residues 254–269 (SPERKEKKINSMEGYH) show a composition bias toward basic and acidic residues.

Belongs to the PRM5 family.

The protein localises to the vacuole membrane. The sequence is that of Vacuolar membrane protein EC1118_1N9_3125g from Saccharomyces cerevisiae (strain Lalvin EC1118 / Prise de mousse) (Baker's yeast).